The sequence spans 1052 residues: uncharacterized protein (1052 aa).

It belongs to the IIV-6 050L family.

This is an uncharacterized protein from Invertebrate iridescent virus 6 (IIV-6).